The primary structure comprises 155 residues: Transcriptional regulator MraZ (155 aa).

2 consecutive SpoVT-AbrB domains span residues R7 to V63 and L92 to R135.

The protein belongs to the MraZ family. Forms oligomers.

It localises to the cytoplasm. The protein resides in the nucleoid. This is Transcriptional regulator MraZ from Chlorobaculum tepidum (strain ATCC 49652 / DSM 12025 / NBRC 103806 / TLS) (Chlorobium tepidum).